A 367-amino-acid chain; its full sequence is uncharacterized protein (367 aa).

Helical transmembrane passes span 18-38, 239-259, 296-316, and 329-349; these read ILAL…GILG, VSYF…IGIG, ILGV…GYLI, and AIFY…ISAL.

It belongs to the ABC-4 integral membrane protein family.

It localises to the cell membrane. This is an uncharacterized protein from Methanocaldococcus jannaschii (strain ATCC 43067 / DSM 2661 / JAL-1 / JCM 10045 / NBRC 100440) (Methanococcus jannaschii).